The chain runs to 368 residues: tRNA(Met) cytidine acetate ligase (368 aa).

Residues 7–20 (IAEF…HKYL), Gly96, Asn152, and Arg175 contribute to the ATP site.

This sequence belongs to the TmcAL family.

The protein localises to the cytoplasm. It carries out the reaction cytidine(34) in elongator tRNA(Met) + acetate + ATP = N(4)-acetylcytidine(34) in elongator tRNA(Met) + AMP + diphosphate. In terms of biological role, catalyzes the formation of N(4)-acetylcytidine (ac(4)C) at the wobble position of elongator tRNA(Met), using acetate and ATP as substrates. First activates an acetate ion to form acetyladenylate (Ac-AMP) and then transfers the acetyl group to tRNA to form ac(4)C34. This is tRNA(Met) cytidine acetate ligase from Streptococcus pyogenes serotype M28 (strain MGAS6180).